Consider the following 450-residue polypeptide: ATP-dependent protease ATPase subunit HslU (450 aa).

ATP is bound by residues valine 29, 71–76 (GVGKTE), aspartate 261, glutamate 328, and arginine 400.

It belongs to the ClpX chaperone family. HslU subfamily. As to quaternary structure, a double ring-shaped homohexamer of HslV is capped on each side by a ring-shaped HslU homohexamer. The assembly of the HslU/HslV complex is dependent on binding of ATP.

Its subcellular location is the cytoplasm. Functionally, ATPase subunit of a proteasome-like degradation complex; this subunit has chaperone activity. The binding of ATP and its subsequent hydrolysis by HslU are essential for unfolding of protein substrates subsequently hydrolyzed by HslV. HslU recognizes the N-terminal part of its protein substrates and unfolds these before they are guided to HslV for hydrolysis. This chain is ATP-dependent protease ATPase subunit HslU, found in Rickettsia felis (strain ATCC VR-1525 / URRWXCal2) (Rickettsia azadi).